The sequence spans 1343 residues: DNA-directed RNA polymerase subunit beta (1343 aa).

Belongs to the RNA polymerase beta chain family. In terms of assembly, the RNAP catalytic core consists of 2 alpha, 1 beta, 1 beta' and 1 omega subunit. When a sigma factor is associated with the core the holoenzyme is formed, which can initiate transcription.

It carries out the reaction RNA(n) + a ribonucleoside 5'-triphosphate = RNA(n+1) + diphosphate. DNA-dependent RNA polymerase catalyzes the transcription of DNA into RNA using the four ribonucleoside triphosphates as substrates. In Shewanella baltica (strain OS223), this protein is DNA-directed RNA polymerase subunit beta.